The primary structure comprises 80 residues: Exodeoxyribonuclease 7 small subunit (80 aa).

It belongs to the XseB family. As to quaternary structure, heterooligomer composed of large and small subunits.

The protein localises to the cytoplasm. The enzyme catalyses Exonucleolytic cleavage in either 5'- to 3'- or 3'- to 5'-direction to yield nucleoside 5'-phosphates.. Functionally, bidirectionally degrades single-stranded DNA into large acid-insoluble oligonucleotides, which are then degraded further into small acid-soluble oligonucleotides. In Lactobacillus helveticus (strain DPC 4571), this protein is Exodeoxyribonuclease 7 small subunit.